The chain runs to 325 residues: Protease HtpX homolog (325 aa).

The chain crosses the membrane as a helical span at residues 20 to 40 (IGYLLGGGGGMMIALVIAVAM). H130 serves as a coordination point for Zn(2+). E131 is a catalytic residue. H134 contributes to the Zn(2+) binding site. 2 consecutive transmembrane segments (helical) span residues 145 to 165 (IVATLAGAISMLGNFAFFLGG) and 173 to 193 (VMGVVGTLLAMIVAPFAAMIV). A Zn(2+)-binding site is contributed by E202. The segment at 288–325 (AMTARAAAPSQNSGPWGQRSDNAGGNSNGGSRYRGPWS) is disordered. Residues 306–325 (RSDNAGGNSNGGSRYRGPWS) show a composition bias toward low complexity.

The protein belongs to the peptidase M48B family. Requires Zn(2+) as cofactor.

The protein localises to the cell inner membrane. This chain is Protease HtpX homolog, found in Brucella suis (strain ATCC 23445 / NCTC 10510).